Reading from the N-terminus, the 31-residue chain is Cycloviolacin-O25 (31 aa).

Residues 1–31 (DIFCGETCAFIPCITHVPGTCSCKSKVCYFN) constitute a cross-link (cyclopeptide (Asp-Asn)). Cystine bridges form between Cys4–Cys21, Cys8–Cys23, and Cys13–Cys28.

In terms of processing, this is a cyclic peptide. In terms of tissue distribution, expressed in roots and runners but not in leaves, petals and petioles (at protein level).

Probably participates in a plant defense mechanism. This is Cycloviolacin-O25 from Viola odorata (Sweet violet).